Consider the following 320-residue polypeptide: Protein PXR1 (320 aa).

The span at 1–11 (MGLAGPRKRTK) shows a compositional bias: basic residues. A disordered region spans residues 1–24 (MGLAGPRKRTKISHDPNNTAWSRS). A compositionally biased stretch (polar residues) spans 15-24 (DPNNTAWSRS). A G-patch domain is found at 25–79 (TSGYGHKIMSAQGWTPGSFLGASNAAHADHFTAGSAGHIRVILKDDNLGLGAKLR). Residues 152–298 (GEEVQTPQIS…MGRQFTRGRH (147 aa)) form a disordered region. The span at 169-182 (KRPKKARKKEKRRA) shows a compositional bias: basic residues. Basic and acidic residues-rich tracts occupy residues 203–214 (RKENKEKKKSSD), 243–256 (KDPE…HDDS), and 269–288 (QESR…EHRP).

The protein belongs to the PINX1 family.

It localises to the nucleus. The protein localises to the nucleolus. In terms of biological role, involved in rRNA-processing at A0, A1 and A2 sites and negatively regulates telomerase. In Ajellomyces capsulatus (strain NAm1 / WU24) (Darling's disease fungus), this protein is Protein PXR1 (PXR1).